Here is a 464-residue protein sequence, read N- to C-terminus: MRCLGGSSLSRLLRMLSQSQGRALSSTGPAVYDVVISGGGMVGTAMACALGSDPHLQHKKVLLLEAGNRKPFDHLPENFSNRVSSITPGSATLLASFGAWDHILAMRLKPYKRMQVWDACSDALITFDKDALEDMGYIVENDIIIEALTKQLELMSDHVEVMYRSRALSYSWPPPYNNGKATPWVEIELADGQRLHTKLLIGADGHNSMVRSAAGMQSVQWNYNHAAVVATLHLSEATDNNVAWQRFLPTGPIALLPLSDTCSSLVWSTSPEHASELVSMDEESFVDTVNSAFWSNENHSEFITSAGSLLHSALSFFMPTGSSPRQLPPSVSRVEQNSRASFPLGLKHATEYIRHRVALIGDAAHRVHPLAGQGVNMGFGDVACLAHHLSQAAFNGSDLGSTKHLLEYETERQRHNLPLMAAVDLLKRLYNTKQPPIVLLRTLGLQATNALTPVKEQIMAFASK.

Residues 1–24 constitute a mitochondrion transit peptide; it reads MRCLGGSSLSRLLRMLSQSQGRAL.

The protein belongs to the UbiH/COQ6 family. In terms of assembly, component of a multi-subunit COQ enzyme complex, composed of at least coq3, coq4, coq5, coq6, coq7 and coq9. Interacts with coq8b and coq7. The cofactor is FAD.

The protein resides in the mitochondrion inner membrane. It localises to the golgi apparatus. The protein localises to the cell projection. The catalysed reaction is a 4-hydroxy-3-(all-trans-polyprenyl)benzoate + 2 reduced [2Fe-2S]-[ferredoxin] + O2 + 2 H(+) = a 3,4-dihydroxy-5-(all-trans-polyprenyl)benzoate + 2 oxidized [2Fe-2S]-[ferredoxin] + H2O. It carries out the reaction a 2-methoxy-6-(all-trans-polyprenyl)phenol + 2 reduced [2Fe-2S]-[ferredoxin] + O2 + 2 H(+) = a 2-methoxy-6-(all-trans-polyprenyl)benzene-1,4-diol + 2 oxidized [2Fe-2S]-[ferredoxin] + H2O. It functions in the pathway cofactor biosynthesis; ubiquinone biosynthesis. Its function is as follows. FAD-dependent monooxygenase required for two non-consecutive steps during ubiquinone biosynthesis. Required for the C5-ring hydroxylation during ubiquinone biosynthesis by catalyzing the hydroxylation of 4-hydroxy-3-(all-trans-polyprenyl)benzoic acid to 3,4-dihydroxy-5-(all-trans-polyprenyl)benzoic acid. Also acts downstream of coq4, for the C1-hydroxylation during ubiquinone biosynthesis by catalyzing the hydroxylation of 2-methoxy-6-(all-trans-polyprenyl)phenol to 2-methoxy-6-(all-trans-polyprenyl)benzene-1,4-diol. The electrons required for the hydroxylation reaction are funneled indirectly to coq6 from NADPH via a ferredoxin/ferredoxin reductase system. The chain is Ubiquinone biosynthesis monooxygenase COQ6, mitochondrial from Xenopus tropicalis (Western clawed frog).